A 190-amino-acid polypeptide reads, in one-letter code: dCTP deaminase (190 aa).

DCTP-binding positions include 113-118, 137-139, Gln158, Tyr172, and Gln182; these read KSTYAR and TLE. Glu139 (proton donor/acceptor) is an active-site residue.

This sequence belongs to the dCTP deaminase family. As to quaternary structure, homotrimer.

The enzyme catalyses dCTP + H2O + H(+) = dUTP + NH4(+). It functions in the pathway pyrimidine metabolism; dUMP biosynthesis; dUMP from dCTP (dUTP route): step 1/2. Its function is as follows. Catalyzes the deamination of dCTP to dUTP. This Chromobacterium violaceum (strain ATCC 12472 / DSM 30191 / JCM 1249 / CCUG 213 / NBRC 12614 / NCIMB 9131 / NCTC 9757 / MK) protein is dCTP deaminase.